A 427-amino-acid polypeptide reads, in one-letter code: F-box protein At2g16450 (427 aa).

An F-box domain is found at 1–45 (MNPSPITIDLILEILSRLPAKSVRRFHCVSKRWASIFGSPYFKEL).

In Arabidopsis thaliana (Mouse-ear cress), this protein is F-box protein At2g16450.